A 195-amino-acid chain; its full sequence is Pyruvoyl-dependent arginine decarboxylase AaxB (195 aa).

Ser-53 bears the Pyruvic acid (Ser) mark.

It belongs to the pyruvoyl-dependent arginine decarboxylase family. Trimer of an alpha-beta dimer. The cofactor is pyruvate.

It localises to the cytoplasm. The catalysed reaction is L-arginine + H(+) = agmatine + CO2. In terms of biological role, part of the AaxABC system, catalyzes the decarboxylation of L-arginine. The arginine uptake by the bacterium in the macrophage may be a virulence factor against the host innate immune response. The chain is Pyruvoyl-dependent arginine decarboxylase AaxB (aaxB) from Chlamydia trachomatis serovar L2 (strain ATCC VR-902B / DSM 19102 / 434/Bu).